Reading from the N-terminus, the 513-residue chain is Cobyric acid synthase (513 aa).

The 201-residue stretch at 270–470 folds into the GATase cobBQ-type domain; that stretch reads RLRIAIVAYP…THGLFESPAV (201 aa). The active-site Nucleophile is Cys-351. His-462 is a catalytic residue.

It belongs to the CobB/CobQ family. CobQ subfamily.

It participates in cofactor biosynthesis; adenosylcobalamin biosynthesis. Its function is as follows. Catalyzes amidations at positions B, D, E, and G on adenosylcobyrinic A,C-diamide. NH(2) groups are provided by glutamine, and one molecule of ATP is hydrogenolyzed for each amidation. This Leptothrix cholodnii (strain ATCC 51168 / LMG 8142 / SP-6) (Leptothrix discophora (strain SP-6)) protein is Cobyric acid synthase.